The primary structure comprises 323 residues: Acetyl esterase (323 aa).

An Involved in the stabilization of the negatively charged intermediate by the formation of the oxyanion hole motif is present at residues H91 to G93. Residues S165, D262, and H292 contribute to the active site.

The protein belongs to the 'GDXG' lipolytic enzyme family. As to quaternary structure, homodimer. Interacts with MalT and MelA.

The protein localises to the cytoplasm. Displays esterase activity towards short chain fatty esters (acyl chain length of up to 8 carbons). Able to hydrolyze triacetylglycerol (triacetin) and tributyrylglycerol (tributyrin), but not trioleylglycerol (triolein) or cholesterol oleate. Negatively regulates MalT activity by antagonizing maltotriose binding. Inhibits MelA galactosidase activity. This chain is Acetyl esterase, found in Salmonella paratyphi B (strain ATCC BAA-1250 / SPB7).